The chain runs to 803 residues: Exo-1,4-beta-xylosidase xlnD (803 aa).

The first 18 residues, 1-18 (MRSLISVAVLSALPTAFS), serve as a signal peptide directing secretion. Residues Asn-21, Asn-44, Asn-85, Asn-122, Asn-140, and Asn-234 are each glycosylated (N-linked (GlcNAc...) asparagine). Residue Asp-307 is part of the active site. N-linked (GlcNAc...) asparagine glycosylation is found at Asn-437, Asn-474, Asn-515, Asn-611, Asn-676, and Asn-698.

The protein belongs to the glycosyl hydrolase 3 family.

The protein localises to the secreted. It catalyses the reaction Hydrolysis of (1-&gt;4)-beta-D-xylans, to remove successive D-xylose residues from the non-reducing termini.. The protein operates within glycan degradation; xylan degradation. In terms of biological role, xylan 1,4-beta-xylosidase involved in the hydrolysis of xylan, a major structural heterogeneous polysaccharide found in plant biomass representing the second most abundant polysaccharide in the biosphere, after cellulose. This Emericella nidulans (strain FGSC A4 / ATCC 38163 / CBS 112.46 / NRRL 194 / M139) (Aspergillus nidulans) protein is Exo-1,4-beta-xylosidase xlnD (xlnD).